Consider the following 524-residue polypeptide: Bifunctional purine biosynthesis protein PurH (524 aa).

Residues 1–144 (MTRRALVSVS…KNSAHVGVVV (144 aa)) form the MGS-like domain.

The protein belongs to the PurH family.

It catalyses the reaction (6R)-10-formyltetrahydrofolate + 5-amino-1-(5-phospho-beta-D-ribosyl)imidazole-4-carboxamide = 5-formamido-1-(5-phospho-D-ribosyl)imidazole-4-carboxamide + (6S)-5,6,7,8-tetrahydrofolate. The enzyme catalyses IMP + H2O = 5-formamido-1-(5-phospho-D-ribosyl)imidazole-4-carboxamide. Its pathway is purine metabolism; IMP biosynthesis via de novo pathway; 5-formamido-1-(5-phospho-D-ribosyl)imidazole-4-carboxamide from 5-amino-1-(5-phospho-D-ribosyl)imidazole-4-carboxamide (10-formyl THF route): step 1/1. It participates in purine metabolism; IMP biosynthesis via de novo pathway; IMP from 5-formamido-1-(5-phospho-D-ribosyl)imidazole-4-carboxamide: step 1/1. The polypeptide is Bifunctional purine biosynthesis protein PurH (Anaeromyxobacter dehalogenans (strain 2CP-C)).